A 157-amino-acid polypeptide reads, in one-letter code: 17.8 kDa class I heat shock protein (157 aa).

The sHSP domain maps to 41–156; the sequence is ETSAITNARV…KAQVKSIDIS (116 aa).

The protein belongs to the small heat shock protein (HSP20) family. In terms of assembly, homodimer under normal physiological conditions. Aggregates in high oligomeric complexes after heat shock. Binds to AKR2A and to chloroplasts. In terms of tissue distribution, expressed ubiquitously at low levels under normal physiological conditions.

The protein resides in the cytoplasm. Cytosolic mediator for sorting and targeting of nascent chloroplast outer envelope membrane (OEM) proteins to the chloroplast. Functions as an AKR2A cofactor to facilitate the targeting of OEP7 to chloroplasts. This chain is 17.8 kDa class I heat shock protein (HSP17.8), found in Arabidopsis thaliana (Mouse-ear cress).